We begin with the raw amino-acid sequence, 64 residues long: Large ribosomal subunit protein uL30 (64 aa).

Belongs to the universal ribosomal protein uL30 family. In terms of assembly, part of the 50S ribosomal subunit.

This Methylorubrum populi (strain ATCC BAA-705 / NCIMB 13946 / BJ001) (Methylobacterium populi) protein is Large ribosomal subunit protein uL30.